The primary structure comprises 137 residues: MMRSYEELLERAFEKLADKDVVRRERFEIPRVSIQREGARTILKNFSQIAKTLNRSEDHLYKYIVKSLGTAGFIDNGRLVLQGKFTESELQKEVDDYVRLYVLCRECNSPDTEFIKEERVLMLRCLACGAKHPVRNI.

It belongs to the eIF-2-beta/eIF-5 family. In terms of assembly, heterotrimer composed of an alpha, a beta and a gamma chain.

In terms of biological role, eIF-2 functions in the early steps of protein synthesis by forming a ternary complex with GTP and initiator tRNA. This is Translation initiation factor 2 subunit beta (eif2b) from Archaeoglobus fulgidus (strain ATCC 49558 / DSM 4304 / JCM 9628 / NBRC 100126 / VC-16).